Reading from the N-terminus, the 436-residue chain is Trigger factor (436 aa).

A PPIase FKBP-type domain is found at 161–246 (EDQLNIDFVG…VNTVSEPKLP (86 aa)).

It belongs to the FKBP-type PPIase family. Tig subfamily.

The protein localises to the cytoplasm. The enzyme catalyses [protein]-peptidylproline (omega=180) = [protein]-peptidylproline (omega=0). Its function is as follows. Involved in protein export. Acts as a chaperone by maintaining the newly synthesized protein in an open conformation. Functions as a peptidyl-prolyl cis-trans isomerase. This is Trigger factor from Pseudomonas savastanoi pv. phaseolicola (strain 1448A / Race 6) (Pseudomonas syringae pv. phaseolicola (strain 1448A / Race 6)).